A 434-amino-acid chain; its full sequence is MADVKVQSESESSDSHPLVDYQSLPPYPPPHPPVEVEENQPKTSPTPPPPHWMRYPPVLMPQMMYAPPPPMPFSPYHQYPNHHHFHHQSRGNKHQNAFNGENKTIWVGDLQNWMDEAYLNSAFTSAEEREIVSLKVIRNKHNGSSEGYGFVEFESHDVADKVLQEFNGAPMPNTDQPFRLNWASFSTGEKRLENNGPDLSIFVGDLAPDVSDALLHETFSEKYPSVKAAKVVLDANTGRSKGYGFVRFGDENERTKAMTEMNGVKCSSRAMRIGPATPRKTNGYQQQGGYMPSGAFTRSEGDTINTTIFVGGLDSSVTDEDLKQPFSEFGEIVSVKIPVGKGCGFVQFVNRPNAEEALEKLNGTVIGKQTVRLSWGRNPANKQPRDKYGNQWVDPYYGGQFYNGYGYMVPQPDPRMYPAAPYYPMYGGHQQQVS.

Residues 1 to 50 (MADVKVQSESESSDSHPLVDYQSLPPYPPPHPPVEVEENQPKTSPTPPPP) form a disordered region. RRM domains are found at residues 103 to 185 (KTIW…WASF), 199 to 278 (LSIF…PATP), and 306 to 378 (TTIF…WGRN).

It belongs to the polyadenylate-binding RBP47 family. Interacts with the poly(A) tail of mRNA in nucleus.

Its subcellular location is the nucleus. It is found in the cytoplasmic granule. In terms of biological role, heterogeneous nuclear ribonucleoprotein (hnRNP)-protein binding the poly(A) tail of mRNA and probably involved in some steps of pre-mRNA maturation. This chain is Polyadenylate-binding protein RBP47C' (RBP47C'), found in Arabidopsis thaliana (Mouse-ear cress).